Here is a 343-residue protein sequence, read N- to C-terminus: MRGLFKSKPRTPADIVRQTRDLLLYADRSNSFPDLRESKREEKMVELSKSIRDLKLILYGNSEAEPVAEACAQLTQEFFKADTLRRLLTSLPNLNLEARKDATQVVANLQRQQVNSRLIAADYLESNIDLMDFLVDGFENTDMALHYGTMFRECIRHQIVAKYVLDSEHVKKFFYYIQLPNFDIAADAAATFKELLTRHKSTVAEFLIKNEDWFFADYNSKLLESTNYITRRQAIKLLGDILLDRSNSAVMTKYVSSMDNLRILMNLLRESSKTIQIEAFHVFKLFVANQNKPSDIANILVANRNKLLRLLADIKPDKEDERFDADKAQVVREIANLKLRELA.

This sequence belongs to the Mo25 family.

This chain is Putative MO25-like protein At4g17270, found in Arabidopsis thaliana (Mouse-ear cress).